The primary structure comprises 386 residues: Lysophosphatidylserine lipase ABHD12 (386 aa).

Residues Met-1–Phe-66 lie on the Cytoplasmic side of the membrane. Residues Leu-67–Ile-87 form a helical membrane-spanning segment. Residues Gln-88 to Gln-386 lie on the Extracellular side of the membrane. Asn-114 is a glycosylation site (N-linked (GlcNAc...) asparagine). The active-site Nucleophile is the Ser-237. Active-site charge relay system residues include Asp-324 and His-363.

This sequence belongs to the serine esterase family.

The protein resides in the endoplasmic reticulum membrane. It carries out the reaction 1-(9Z-octadecenoyl)-sn-glycero-3-phospho-L-serine + H2O = sn-glycero-3-phospho-L-serine + (9Z)-octadecenoate + H(+). The catalysed reaction is 1-(9Z-octadecenoyl)-sn-glycero-3-phospho-(1'-sn-glycerol) + H2O = sn-glycero-3-phospho-(1'-sn-glycerol) + (9Z)-octadecenoate + H(+). It catalyses the reaction 1-(9Z-octadecenoyl)-sn-glycero-3-phospho-(1D-myo-inositol) + H2O = sn-glycero-3-phospho-1D-myo-inositol + (9Z)-octadecenoate + H(+). The enzyme catalyses 1-(9Z-octadecenoyl)-sn-glycero-3-phosphoethanolamine + H2O = sn-glycero-3-phosphoethanolamine + (9Z)-octadecenoate + H(+). It carries out the reaction 1-(9Z-octadecenoyl)-sn-glycero-3-phosphocholine + H2O = 1-(9Z-octadecenoyl)-sn-glycerol + phosphocholine + H(+). The catalysed reaction is 2-(9Z-octadecenoyl)-glycerol + H2O = glycerol + (9Z)-octadecenoate + H(+). It catalyses the reaction 1-hexadecanoyl-sn-glycero-3-phospho-L-serine + H2O = sn-glycero-3-phospho-L-serine + hexadecanoate + H(+). The enzyme catalyses 2-(5Z,8Z,11Z,14Z-eicosatetraenoyl)-glycerol + H2O = glycerol + (5Z,8Z,11Z,14Z)-eicosatetraenoate + H(+). It carries out the reaction Hydrolyzes glycerol monoesters of long-chain fatty acids.. The catalysed reaction is 1-decanoylglycerol + H2O = decanoate + glycerol + H(+). It catalyses the reaction 1-dodecanoylglycerol + H2O = dodecanoate + glycerol + H(+). The enzyme catalyses 1-tetradecanoylglycerol + H2O = tetradecanoate + glycerol + H(+). It carries out the reaction 2-hexadecanoylglycerol + H2O = glycerol + hexadecanoate + H(+). The catalysed reaction is 1-(9Z-octadecenoyl)-glycerol + H2O = glycerol + (9Z)-octadecenoate + H(+). It catalyses the reaction 2-(9Z,12Z-octadecadienoyl)-glycerol + H2O = (9Z,12Z)-octadecadienoate + glycerol + H(+). The enzyme catalyses 1-(5Z,8Z,11Z,14Z-eicosatetraenoyl)-glycerol + H2O = glycerol + (5Z,8Z,11Z,14Z)-eicosatetraenoate + H(+). It carries out the reaction 1-(9Z,12Z-octadecadienoyl)-glycerol + H2O = (9Z,12Z)-octadecadienoate + glycerol + H(+). The catalysed reaction is 1-hexadecanoylglycerol + H2O = glycerol + hexadecanoate + H(+). It catalyses the reaction 1-octadecanoylglycerol + H2O = octadecanoate + glycerol + H(+). The enzyme catalyses 1-octadecanoyl-2-(9,10-epoxyoctadecanoyl)-sn-glycero-3-phospho-L-serine + H2O = 9,10-epoxyoctadecanoate + 1-octadecanoyl-sn-glycero-3-phosphoserine + H(+). It carries out the reaction 1-octadecanoyl-2-(10-hydroxyoctadecanoyl)-sn-glycero-3-phospho-L-serine + H2O = 1-octadecanoyl-sn-glycero-3-phosphoserine + 10-hydroxyoctadecanoate + H(+). The catalysed reaction is 1-hexadecanoyl-2-(10-hydroxyoctadecanoyl)-sn-glycero-3-phospho-L-serine + H2O = 10-hydroxyoctadecanoate + 1-hexadecanoyl-sn-glycero-3-phospho-L-serine + H(+). In terms of biological role, lysophosphatidylserine (LPS) lipase that mediates the hydrolysis of lysophosphatidylserine, a class of signaling lipids that regulates immunological and neurological processes. Represents a major lysophosphatidylserine lipase in the brain, thereby playing a key role in the central nervous system. Also able to hydrolyze oxidized phosphatidylserine; oxidized phosphatidylserine is produced in response to severe inflammatory stress and constitutes a proapoptotic 'eat me' signal. Also has monoacylglycerol (MAG) lipase activity: hydrolyzes 2-arachidonoylglycerol (2-AG), thereby acting as a regulator of endocannabinoid signaling pathways. Has a strong preference for very-long-chain lipid substrates; substrate specificity is likely due to improved catalysis and not improved substrate binding. In Xenopus tropicalis (Western clawed frog), this protein is Lysophosphatidylserine lipase ABHD12.